The chain runs to 2194 residues: Nucleosome-remodeling factor subunit NURF301-like (2194 aa).

Over residues 1 to 12 (MAPPRGRSKRKH) the composition is skewed to basic residues. The disordered stretch occupies residues 1–137 (MAPPRGRSKR…EEEESSDDEF (137 aa)). Over residues 60-79 (AQRETPSDAEEVEVKIEEIS) the composition is skewed to basic and acidic residues. Over residues 80-93 (VRSTPASTPAPKST) the composition is skewed to polar residues. Basic residues predominate over residues 94–112 (SKARGRPKKNPTPPRRKSL). Acidic residues predominate over residues 118–137 (DIIYMDEDSEEEEESSDDEF). DDT domains are found at residues 196–256 (TASI…SDDE) and 341–396 (VGKF…SAVR). Residues 347–392 (DENCRVCGKSSGRVVGCTQCEAAFHVECSHLKPFPEVLVCNICKKN) form a PHD-type 1 zinc finger. Disordered stretches follow at residues 1091 to 1122 (ESWL…SLDN), 1158 to 1255 (AKRK…PQPN), 1413 to 1433 (TSNF…PVYS), 1657 to 1701 (MRQE…SNDS), and 1834 to 1888 (ESIA…HTPG). Residues 1151–1187 (RAEAEKTAKRKLEATRKAQKAKEDEERRRIQQQQQRS) adopt a coiled-coil conformation. The segment covering 1158–1179 (AKRKLEATRKAQKAKEDEERRR) has biased composition (basic and acidic residues). Over residues 1665-1684 (TSGYDSSGNPIRSITSSGDT) the composition is skewed to polar residues. A compositionally biased stretch (basic and acidic residues) spans 1852–1861 (KSEDDRDKPE). DDT domains lie at 1883–1953 (AFHT…EQER) and 1948–2014 (IEEQ…AEGY). 2 consecutive PHD-type zinc fingers follow at residues 1899–1950 (IEHC…CIEE) and 1959–2010 (ALYC…CTRE). Residues 2030–2134 (QLTRADYTHV…EVFDKKLIDV (105 aa)) form the Bromo domain.

This sequence belongs to the BPTF family. In terms of assembly, part of a nucleosome remodeling factor-like (NURF-like) complex containing nurf-1 and isw-1.

It localises to the nucleus. In terms of biological role, histone-binding component of a NURF-like (nucleosome remodeling factor-like) complex, which would catalyze ATP-dependent nucleosome sliding and facilitate transcription of chromatin. Involved in vulval cell fates. In Caenorhabditis elegans, this protein is Nucleosome-remodeling factor subunit NURF301-like (nurf-1).